Here is a 623-residue protein sequence, read N- to C-terminus: tRNA uridine 5-carboxymethylaminomethyl modification enzyme MnmG (623 aa).

12-17 (GAGHAG) serves as a coordination point for FAD. 272 to 286 (GPRYCPSIEDKINRF) contributes to the NAD(+) binding site.

It belongs to the MnmG family. As to quaternary structure, homodimer. Heterotetramer of two MnmE and two MnmG subunits. Requires FAD as cofactor.

It localises to the cytoplasm. Functionally, NAD-binding protein involved in the addition of a carboxymethylaminomethyl (cmnm) group at the wobble position (U34) of certain tRNAs, forming tRNA-cmnm(5)s(2)U34. The protein is tRNA uridine 5-carboxymethylaminomethyl modification enzyme MnmG of Flavobacterium psychrophilum (strain ATCC 49511 / DSM 21280 / CIP 103535 / JIP02/86).